The primary structure comprises 286 residues: Bifunctional protein FolD (286 aa).

NADP(+)-binding positions include 170–172 and I236; that span reads GHS.

The protein belongs to the tetrahydrofolate dehydrogenase/cyclohydrolase family. Homodimer.

It carries out the reaction (6R)-5,10-methylene-5,6,7,8-tetrahydrofolate + NADP(+) = (6R)-5,10-methenyltetrahydrofolate + NADPH. The catalysed reaction is (6R)-5,10-methenyltetrahydrofolate + H2O = (6R)-10-formyltetrahydrofolate + H(+). It participates in one-carbon metabolism; tetrahydrofolate interconversion. In terms of biological role, catalyzes the oxidation of 5,10-methylenetetrahydrofolate to 5,10-methenyltetrahydrofolate and then the hydrolysis of 5,10-methenyltetrahydrofolate to 10-formyltetrahydrofolate. The protein is Bifunctional protein FolD of Methanococcoides burtonii (strain DSM 6242 / NBRC 107633 / OCM 468 / ACE-M).